Here is a 155-residue protein sequence, read N- to C-terminus: Transcriptional repressor NrdR (155 aa).

A zinc finger lies at 3-34 (CPFCGNIDTQVKDSRPAEDHVSIRRRRFCPAC). The region spanning 49–139 (LVVIKSSGKR…VYKNFQAADD (91 aa)) is the ATP-cone domain.

This sequence belongs to the NrdR family. Zn(2+) is required as a cofactor.

Functionally, negatively regulates transcription of bacterial ribonucleotide reductase nrd genes and operons by binding to NrdR-boxes. In Cereibacter sphaeroides (strain ATCC 17029 / ATH 2.4.9) (Rhodobacter sphaeroides), this protein is Transcriptional repressor NrdR.